Here is a 364-residue protein sequence, read N- to C-terminus: Putative agmatine deiminase (364 aa).

The Amidino-cysteine intermediate role is filled by Cys355.

Belongs to the agmatine deiminase family.

It catalyses the reaction agmatine + H2O = N-carbamoylputrescine + NH4(+). The chain is Putative agmatine deiminase from Mycoplasma capricolum subsp. capricolum (strain California kid / ATCC 27343 / NCTC 10154).